The chain runs to 701 residues: Elongation factor G (701 aa).

The tr-type G domain maps to 8 to 290 (KHYRNIGISA…AVIEYLPAPI (283 aa)). Residues 17–24 (AHIDAGKT), 88–92 (DTPGH), and 142–145 (NKMD) each bind GTP.

This sequence belongs to the TRAFAC class translation factor GTPase superfamily. Classic translation factor GTPase family. EF-G/EF-2 subfamily.

The protein resides in the cytoplasm. Catalyzes the GTP-dependent ribosomal translocation step during translation elongation. During this step, the ribosome changes from the pre-translocational (PRE) to the post-translocational (POST) state as the newly formed A-site-bound peptidyl-tRNA and P-site-bound deacylated tRNA move to the P and E sites, respectively. Catalyzes the coordinated movement of the two tRNA molecules, the mRNA and conformational changes in the ribosome. The sequence is that of Elongation factor G from Hamiltonella defensa subsp. Acyrthosiphon pisum (strain 5AT).